The following is a 411-amino-acid chain: Cytosolic Fe-S cluster assembly factor narfl (411 aa).

[4Fe-4S] cluster-binding residues include Cys11, Cys124, Cys180, Cys329, and Cys333.

It belongs to the NARF family. In terms of assembly, component of the CIA complex.

Its function is as follows. Component of the cytosolic iron-sulfur protein assembly (CIA) complex, a multiprotein complex that mediates the incorporation of iron-sulfur cluster into extramitochondrial Fe/S proteins. The protein is Cytosolic Fe-S cluster assembly factor narfl (narfl) of Danio rerio (Zebrafish).